The primary structure comprises 208 residues: Large ribosomal subunit protein uL3 (208 aa).

An N5-methylglutamine modification is found at Gln149.

Belongs to the universal ribosomal protein uL3 family. In terms of assembly, part of the 50S ribosomal subunit. Forms a cluster with proteins L14 and L19. Methylated by PrmB.

Its function is as follows. One of the primary rRNA binding proteins, it binds directly near the 3'-end of the 23S rRNA, where it nucleates assembly of the 50S subunit. This chain is Large ribosomal subunit protein uL3, found in Histophilus somni (strain 129Pt) (Haemophilus somnus).